Consider the following 85-residue polypeptide: Conotoxin MaIr94 (85 aa).

A signal peptide spans 1–22 (MKLTCVLIITVLFLTACQLTAA). Residues 23–49 (GNSRDKQEDPVVRSSGEVQRSEDIKLA) constitute a propeptide that is removed on maturation. 3 cysteine pairs are disulfide-bonded: Cys-52-Cys-69, Cys-59-Cys-73, and Cys-68-Cys-84.

It belongs to the conotoxin O1 superfamily. As to expression, expressed by the venom duct.

The protein resides in the secreted. In terms of biological role, produces no obvious effect on ionic currents when tested on the mouse dorsal rooted ganglia (DRG). The protein is Conotoxin MaIr94 of Conus marmoreus (Marble cone).